Reading from the N-terminus, the 127-residue chain is Fluoride-specific ion channel FluC (127 aa).

The next 4 membrane-spanning stretches (helical) occupy residues L4 to I24, Y38 to F58, I71 to V91, and L104 to L124. The Na(+) site is built by G78 and T81.

The protein belongs to the fluoride channel Fluc/FEX (TC 1.A.43) family.

It is found in the cell inner membrane. It carries out the reaction fluoride(in) = fluoride(out). With respect to regulation, na(+) is not transported, but it plays an essential structural role and its presence is essential for fluoride channel function. In terms of biological role, fluoride-specific ion channel. Important for reducing fluoride concentration in the cell, thus reducing its toxicity. This is Fluoride-specific ion channel FluC from Vibrio campbellii (strain ATCC BAA-1116).